The following is a 418-amino-acid chain: Tyrosine--tRNA ligase (418 aa).

Y34 is a binding site for L-tyrosine. A 'HIGH' region motif is present at residues 39–48; sequence PTADSLHLGH. L-tyrosine is bound by residues Y169 and Q173. The short motif at 229-233 is the 'KMSKS' region element; sequence KFGKS. An ATP-binding site is contributed by K232. Residues 352–418 enclose the S4 RNA-binding domain; that stretch reads NNIVELLVSS…GKKKYFVLTY (67 aa).

It belongs to the class-I aminoacyl-tRNA synthetase family. TyrS type 1 subfamily. As to quaternary structure, homodimer.

It localises to the cytoplasm. It catalyses the reaction tRNA(Tyr) + L-tyrosine + ATP = L-tyrosyl-tRNA(Tyr) + AMP + diphosphate + H(+). In terms of biological role, catalyzes the attachment of tyrosine to tRNA(Tyr) in a two-step reaction: tyrosine is first activated by ATP to form Tyr-AMP and then transferred to the acceptor end of tRNA(Tyr). This chain is Tyrosine--tRNA ligase, found in Streptococcus pneumoniae (strain CGSP14).